We begin with the raw amino-acid sequence, 478 residues long: Probable cytosolic Fe-S cluster assembly factor AAEL012261 (478 aa).

The [4Fe-4S] cluster site is built by Cys23, Cys69, Cys72, Cys75, Cys189, Cys245, Cys396, and Cys400.

It belongs to the NARF family.

Its function is as follows. Component of the cytosolic iron-sulfur (Fe/S) protein assembly machinery. Required for maturation of extramitochondrial Fe/S proteins. In Aedes aegypti (Yellowfever mosquito), this protein is Probable cytosolic Fe-S cluster assembly factor AAEL012261.